The primary structure comprises 397 residues: S-adenosylmethionine synthase (397 aa).

His-16 lines the ATP pocket. Asp-18 is a binding site for Mg(2+). Glu-44 provides a ligand contact to K(+). Residues Glu-57 and Gln-100 each contribute to the L-methionine site. The segment at 100-110 (QSPDIAQGVNE) is flexible loop. Residues 175-177 (DAK), 242-243 (RF), Asp-251, 257-258 (RK), Ala-274, and Lys-278 contribute to the ATP site. Asp-251 provides a ligand contact to L-methionine. Position 282 (Lys-282) interacts with L-methionine.

Belongs to the AdoMet synthase family. As to quaternary structure, homotetramer; dimer of dimers. Requires Mg(2+) as cofactor. The cofactor is K(+).

The protein resides in the cytoplasm. The enzyme catalyses L-methionine + ATP + H2O = S-adenosyl-L-methionine + phosphate + diphosphate. It participates in amino-acid biosynthesis; S-adenosyl-L-methionine biosynthesis; S-adenosyl-L-methionine from L-methionine: step 1/1. Catalyzes the formation of S-adenosylmethionine (AdoMet) from methionine and ATP. The overall synthetic reaction is composed of two sequential steps, AdoMet formation and the subsequent tripolyphosphate hydrolysis which occurs prior to release of AdoMet from the enzyme. In Streptococcus thermophilus (strain CNRZ 1066), this protein is S-adenosylmethionine synthase.